The chain runs to 1548 residues: Dicer-like protein 1 (1548 aa).

The span at Met-1–Lys-41 shows a compositional bias: basic and acidic residues. Residues Met-1–Lys-48 are disordered. A Helicase ATP-binding domain is found at Leu-106–Leu-289. Leu-119–Thr-126 lines the ATP pocket. Residues Asp-232 to His-235 carry the DEAH box motif. In terms of domain architecture, Helicase C-terminal spans Thr-428–Leu-589. The region spanning Ser-624–Val-718 is the Dicer dsRNA-binding fold domain. In terms of domain architecture, PAZ spans Pro-871–Pro-1006. 2 consecutive RNase III domains span residues Leu-1051–Arg-1197 and Ala-1248–Lys-1411. Positions 1288, 1397, and 1400 each coordinate Mg(2+). Residues Thr-1445–Ser-1518 enclose the DRBM domain. The Zn(2+) site is built by Cys-1457, His-1489, Cys-1530, and Cys-1532.

This sequence belongs to the helicase family. Dicer subfamily. Mg(2+) serves as cofactor. It depends on Mn(2+) as a cofactor.

In terms of biological role, dicer-like endonuclease involved in cleaving double-stranded RNA in the RNA interference (RNAi) pathway. Produces 21 to 25 bp dsRNAs (siRNAs) which target the selective destruction of homologous RNAs leading to sequence-specific suppression of gene expression, called post-transcriptional gene silencing (PTGS). Part of a broad host defense response against viral infection and transposons. The sequence is that of Dicer-like protein 1 (DCL-1) from Cryphonectria parasitica (Chestnut blight fungus).